A 235-amino-acid chain; its full sequence is Glucosamine-6-phosphate deaminase (235 aa).

Residue D62 is the Proton acceptor; for enolization step of the active site. Catalysis depends on N128, which acts as the For ring-opening step. Residue H130 is the Proton acceptor; for ring-opening step of the active site. E135 acts as the For ring-opening step in catalysis.

This sequence belongs to the glucosamine/galactosamine-6-phosphate isomerase family. NagB subfamily.

It catalyses the reaction alpha-D-glucosamine 6-phosphate + H2O = beta-D-fructose 6-phosphate + NH4(+). It participates in amino-sugar metabolism; N-acetylneuraminate degradation; D-fructose 6-phosphate from N-acetylneuraminate: step 5/5. Functionally, catalyzes the reversible isomerization-deamination of glucosamine 6-phosphate (GlcN6P) to form fructose 6-phosphate (Fru6P) and ammonium ion. The polypeptide is Glucosamine-6-phosphate deaminase (Streptococcus gordonii (strain Challis / ATCC 35105 / BCRC 15272 / CH1 / DL1 / V288)).